Consider the following 98-residue polypeptide: Co-chaperonin GroES (98 aa).

The protein belongs to the GroES chaperonin family. As to quaternary structure, heptamer of 7 subunits arranged in a ring. Interacts with the chaperonin GroEL.

It localises to the cytoplasm. Functionally, together with the chaperonin GroEL, plays an essential role in assisting protein folding. The GroEL-GroES system forms a nano-cage that allows encapsulation of the non-native substrate proteins and provides a physical environment optimized to promote and accelerate protein folding. GroES binds to the apical surface of the GroEL ring, thereby capping the opening of the GroEL channel. This is Co-chaperonin GroES from Kineococcus radiotolerans (strain ATCC BAA-149 / DSM 14245 / SRS30216).